The sequence spans 117 residues: Large ribosomal subunit protein bL20 (117 aa).

This sequence belongs to the bacterial ribosomal protein bL20 family.

Binds directly to 23S ribosomal RNA and is necessary for the in vitro assembly process of the 50S ribosomal subunit. It is not involved in the protein synthesizing functions of that subunit. This chain is Large ribosomal subunit protein bL20, found in Leptospira biflexa serovar Patoc (strain Patoc 1 / Ames).